The sequence spans 428 residues: 3-deoxy-D-manno-octulosonic acid transferase (428 aa).

Glu-64 serves as the catalytic Proton acceptor. CMP contacts are provided by residues 274–275 (PR), 316–318 (LGE), and 342–345 (NLIE).

This sequence belongs to the glycosyltransferase group 1 family. Glycosyltransferase 30 subfamily.

Its subcellular location is the cell inner membrane. The enzyme catalyses lipid IVA (E. coli) + CMP-3-deoxy-beta-D-manno-octulosonate = alpha-Kdo-(2-&gt;6)-lipid IVA (E. coli) + CMP + H(+). The protein operates within bacterial outer membrane biogenesis; LPS core biosynthesis. Functionally, involved in lipopolysaccharide (LPS) biosynthesis. Catalyzes the transfer of a single 3-deoxy-D-manno-octulosonate (Kdo) residue from CMP-Kdo to lipid IV(A), the tetraacyldisaccharide-1,4'-bisphosphate precursor of lipid A. In Bordetella pertussis, this protein is 3-deoxy-D-manno-octulosonic acid transferase (waaA).